Reading from the N-terminus, the 550-residue chain is 2-succinyl-5-enolpyruvyl-6-hydroxy-3-cyclohexene-1-carboxylate synthase (550 aa).

Belongs to the TPP enzyme family. MenD subfamily. Homodimer. Mg(2+) serves as cofactor. Mn(2+) is required as a cofactor. The cofactor is thiamine diphosphate.

It carries out the reaction isochorismate + 2-oxoglutarate + H(+) = 5-enolpyruvoyl-6-hydroxy-2-succinyl-cyclohex-3-ene-1-carboxylate + CO2. The protein operates within quinol/quinone metabolism; 1,4-dihydroxy-2-naphthoate biosynthesis; 1,4-dihydroxy-2-naphthoate from chorismate: step 2/7. It participates in quinol/quinone metabolism; menaquinone biosynthesis. Its function is as follows. Catalyzes the thiamine diphosphate-dependent decarboxylation of 2-oxoglutarate and the subsequent addition of the resulting succinic semialdehyde-thiamine pyrophosphate anion to isochorismate to yield 2-succinyl-5-enolpyruvyl-6-hydroxy-3-cyclohexene-1-carboxylate (SEPHCHC). The protein is 2-succinyl-5-enolpyruvyl-6-hydroxy-3-cyclohexene-1-carboxylate synthase of Flavobacterium psychrophilum (strain ATCC 49511 / DSM 21280 / CIP 103535 / JIP02/86).